We begin with the raw amino-acid sequence, 309 residues long: DNA-directed RNA polymerase subunit alpha (309 aa).

The segment at 1–227 is alpha N-terminal domain (alpha-NTD); it reads MTFQVECVES…ALFEPLKNVS (227 aa). Positions 237-309 are alpha C-terminal domain (alpha-CTD); it reads EPTPESQTPI…GIKLQESKVS (73 aa).

Belongs to the RNA polymerase alpha chain family. In terms of assembly, in cyanobacteria the RNAP catalytic core is composed of 2 alpha, 1 beta, 1 beta', 1 gamma and 1 omega subunit. When a sigma factor is associated with the core the holoenzyme is formed, which can initiate transcription.

It catalyses the reaction RNA(n) + a ribonucleoside 5'-triphosphate = RNA(n+1) + diphosphate. Functionally, DNA-dependent RNA polymerase catalyzes the transcription of DNA into RNA using the four ribonucleoside triphosphates as substrates. The sequence is that of DNA-directed RNA polymerase subunit alpha from Synechococcus elongatus (strain ATCC 33912 / PCC 7942 / FACHB-805) (Anacystis nidulans R2).